The following is a 70-amino-acid chain: Small ribosomal subunit protein bS21 (70 aa).

The protein belongs to the bacterial ribosomal protein bS21 family.

This is Small ribosomal subunit protein bS21 (rpsU) from Helicobacter pylori (strain J99 / ATCC 700824) (Campylobacter pylori J99).